The chain runs to 240 residues: Phosphoribosylaminoimidazole-succinocarboxamide synthase (240 aa).

The protein belongs to the SAICAR synthetase family.

The catalysed reaction is 5-amino-1-(5-phospho-D-ribosyl)imidazole-4-carboxylate + L-aspartate + ATP = (2S)-2-[5-amino-1-(5-phospho-beta-D-ribosyl)imidazole-4-carboxamido]succinate + ADP + phosphate + 2 H(+). It functions in the pathway purine metabolism; IMP biosynthesis via de novo pathway; 5-amino-1-(5-phospho-D-ribosyl)imidazole-4-carboxamide from 5-amino-1-(5-phospho-D-ribosyl)imidazole-4-carboxylate: step 1/2. The sequence is that of Phosphoribosylaminoimidazole-succinocarboxamide synthase from Anoxybacillus flavithermus (strain DSM 21510 / WK1).